The chain runs to 509 residues: Maturase K (509 aa).

This sequence belongs to the intron maturase 2 family. MatK subfamily.

It is found in the plastid. It localises to the chloroplast. Its function is as follows. Usually encoded in the trnK tRNA gene intron. Probably assists in splicing its own and other chloroplast group II introns. The chain is Maturase K from Avicennia marina (Grey mangrove).